A 680-amino-acid chain; its full sequence is Chondroitin proteoglycan 4 (680 aa).

The N-terminal stretch at 1–18 is a signal peptide; that stretch reads MLRVNLLILLCFVPFSLN. Asn-42, Asn-59, Asn-72, Asn-167, Asn-205, Asn-458, Asn-472, Asn-486, Asn-498, Asn-526, Asn-527, Asn-556, and Asn-604 each carry an N-linked (GlcNAc...) asparagine glycan. A disordered region spans residues 460–680; that stretch reads TKKAETTKKS…PLTTTLHELY (221 aa). Residues 484–500 are compositionally biased toward low complexity; it reads AANTTAETTKTTSANIT. Over residues 520-530 the composition is skewed to polar residues; the sequence is SLDTSGNNSTV. Composition is skewed to low complexity over residues 633-647 and 654-669; these read GEAS…SGEV and SGYS…SSGE. Ser-640 and Ser-644 each carry an O-linked (Xyl...) (chondroitin sulfate) serine glycan. A glycan (N-linked (GlcNAc...) asparagine) is linked at Asn-664.

This is Chondroitin proteoglycan 4 (cpg-4) from Caenorhabditis briggsae.